The primary structure comprises 130 residues: Small ribosomal subunit protein uS9 (130 aa).

It belongs to the universal ribosomal protein uS9 family.

The chain is Small ribosomal subunit protein uS9 from Caldicellulosiruptor bescii (strain ATCC BAA-1888 / DSM 6725 / KCTC 15123 / Z-1320) (Anaerocellum thermophilum).